Reading from the N-terminus, the 141-residue chain is Nucleoside diphosphate kinase (141 aa).

Residues Lys11, Phe59, Arg87, Thr93, Arg104, and Asn114 each coordinate ATP. His117 serves as the catalytic Pros-phosphohistidine intermediate.

This sequence belongs to the NDK family. In terms of assembly, homotetramer. It depends on Mg(2+) as a cofactor.

The protein resides in the cytoplasm. It catalyses the reaction a 2'-deoxyribonucleoside 5'-diphosphate + ATP = a 2'-deoxyribonucleoside 5'-triphosphate + ADP. It carries out the reaction a ribonucleoside 5'-diphosphate + ATP = a ribonucleoside 5'-triphosphate + ADP. Functionally, major role in the synthesis of nucleoside triphosphates other than ATP. The ATP gamma phosphate is transferred to the NDP beta phosphate via a ping-pong mechanism, using a phosphorylated active-site intermediate. The chain is Nucleoside diphosphate kinase from Neisseria meningitidis serogroup A / serotype 4A (strain DSM 15465 / Z2491).